The sequence spans 875 residues: Acetyl-coenzyme A carboxylase carboxyl transferase subunit alpha, chloroplastic (875 aa).

The N-terminal 50 residues, 1-50 (MASSSATLVGSTASDLLRSSTTGFTGVPLRTLGRAGLVLKRRDLTVSVTA), are a transit peptide targeting the chloroplast. The 253-residue stretch at 128 to 380 (EAKYQKALVE…KIAINEAMDE (253 aa)) folds into the CoA carboxyltransferase C-terminal domain. Residues 664–705 (LLLDKNKAATRKQELKKKSDEHKEAARLEQELKKKFDEVMDT) adopt a coiled-coil conformation. The disordered stretch occupies residues 845-875 (KEKYENLTRPAGDTLTDDKLREKVGVNRNFS). Over residues 860 to 869 (TDDKLREKVG) the composition is skewed to basic and acidic residues.

Belongs to the AccA family. Acetyl-CoA carboxylase is a heterohexamer composed of biotin carboxyl carrier protein, biotin carboxylase and two subunits each of ACCase subunit alpha and ACCase plastid-coded subunit beta (accD).

The protein resides in the plastid. Its subcellular location is the chloroplast inner membrane. The catalysed reaction is N(6)-carboxybiotinyl-L-lysyl-[protein] + acetyl-CoA = N(6)-biotinyl-L-lysyl-[protein] + malonyl-CoA. It participates in lipid metabolism; malonyl-CoA biosynthesis; malonyl-CoA from acetyl-CoA: step 1/1. With respect to regulation, activated by reductants such as dithiothreitol (DTT), and by thioredoxin in vivo, following exposure to light. Component of the acetyl coenzyme A carboxylase (ACC) complex. First, biotin carboxylase catalyzes the carboxylation of biotin on its carrier protein (BCCP) and then the CO(2) group is transferred by the carboxyltransferase to acetyl-CoA to form malonyl-CoA. The sequence is that of Acetyl-coenzyme A carboxylase carboxyl transferase subunit alpha, chloroplastic (ACCA) from Pisum sativum (Garden pea).